We begin with the raw amino-acid sequence, 1030 residues long: Translation initiation factor IF-2 (1030 aa).

Composition is skewed to low complexity over residues alanine 56–serine 69 and proline 111–lysine 132. Disordered stretches follow at residues alanine 56–glutamine 361 and serine 394–lysine 434. Positions alanine 134 to glutamate 144 are enriched in basic and acidic residues. Over residues alanine 154–serine 164 the composition is skewed to low complexity. The segment covering leucine 188–serine 206 has biased composition (basic and acidic residues). The span at valine 259–valine 273 shows a compositional bias: low complexity. One can recognise a tr-type G domain in the interval threonine 522 to valine 695. Residues glycine 531 to threonine 538 form a G1 region. Residue glycine 531 to threonine 538 coordinates GTP. Residues glycine 556–histidine 560 are G2. The segment at aspartate 581–glycine 584 is G3. GTP is bound by residues aspartate 581–histidine 585 and asparagine 635–aspartate 638. A G4 region spans residues asparagine 635 to aspartate 638. Residues serine 671 to isoleucine 673 form a G5 region.

This sequence belongs to the TRAFAC class translation factor GTPase superfamily. Classic translation factor GTPase family. IF-2 subfamily.

It is found in the cytoplasm. Functionally, one of the essential components for the initiation of protein synthesis. Protects formylmethionyl-tRNA from spontaneous hydrolysis and promotes its binding to the 30S ribosomal subunits. Also involved in the hydrolysis of GTP during the formation of the 70S ribosomal complex. The sequence is that of Translation initiation factor IF-2 from Synechococcus elongatus (strain ATCC 33912 / PCC 7942 / FACHB-805) (Anacystis nidulans R2).